Consider the following 539-residue polypeptide: Glutamate/serine transporter AimA (539 aa).

A run of 13 helical transmembrane segments spans residues 11 to 31 (FSLMMVGLGSMIGSGWLFGAW), 36 to 56 (IAGPAAIISWVIGMVVILFIA), 82 to 102 (SFIGFIAGWANWIAIVSVIPV), 137 to 157 (AFASVLLLIYFLLNYWTVNLF), 164 to 184 (ITIFKIIIPGLTIGALLFVGF), 199 to 219 (GWASVLTAVATSGIVFAFNGF), 238 to 258 (IAVVGSLFVATVIYVLLQIAF), 283 to 303 (LAIALNINWLVIVLYADAFVS), 350 to 370 (LIVSFIFLFLFRGWGVLAEII), 401 to 421 (LKGLNVIAPLGFIFASLVLYW), 424 to 444 (WPLTGQVLFIILIGLPIYFYY), 457 to 477 (FKAGVWMVFYLLAMMVISYLG), and 486 to 506 (VIHYGWDMVLIAMVSLVFYVW).

The protein belongs to the amino acid-polyamine-organocation (APC) superfamily. AGT (TC 2.A.3.11) family.

It localises to the cell membrane. In terms of biological role, major glutamate and serine transporter. Cannot transport threonine. AimA is the major glutamate transporter under standard growth conditions when glutamate is not limiting in the medium. In Bacillus subtilis (strain 168), this protein is Glutamate/serine transporter AimA.